The sequence spans 292 residues: ATP synthase gamma chain (292 aa).

The protein belongs to the ATPase gamma chain family. As to quaternary structure, F-type ATPases have 2 components, CF(1) - the catalytic core - and CF(0) - the membrane proton channel. CF(1) has five subunits: alpha(3), beta(3), gamma(1), delta(1), epsilon(1). CF(0) has three main subunits: a, b and c.

The protein resides in the cell membrane. Its function is as follows. Produces ATP from ADP in the presence of a proton gradient across the membrane. The gamma chain is believed to be important in regulating ATPase activity and the flow of protons through the CF(0) complex. The sequence is that of ATP synthase gamma chain from Streptococcus pneumoniae (strain JJA).